The chain runs to 854 residues: Translation initiation factor IF-2 (854 aa).

The segment covering 61-72 (KNIKTPTAKKPK) has biased composition (basic residues). Disordered stretches follow at residues 61 to 115 (KNIK…LASA) and 167 to 186 (ESLK…KKES). Residues 73–108 (KENAKDQEKLNESEKKEPKKEESKEQEKQEIIDTHK) show a composition bias toward basic and acidic residues. Residues 353–520 (TRAPVITIMG…IVLLQADILE (168 aa)) form the tr-type G domain. Residues 362–369 (GHVDHGKT) form a G1 region. Residue 362-369 (GHVDHGKT) coordinates GTP. Residues 387–391 (GITQH) are G2. The interval 408–411 (DTPG) is G3. Residues 408–412 (DTPGH) and 462–465 (NKMD) contribute to the GTP site. A G4 region spans residues 462 to 465 (NKMD). Positions 498–500 (SAK) are G5.

The protein belongs to the TRAFAC class translation factor GTPase superfamily. Classic translation factor GTPase family. IF-2 subfamily.

The protein localises to the cytoplasm. One of the essential components for the initiation of protein synthesis. Protects formylmethionyl-tRNA from spontaneous hydrolysis and promotes its binding to the 30S ribosomal subunits. Also involved in the hydrolysis of GTP during the formation of the 70S ribosomal complex. This chain is Translation initiation factor IF-2, found in Campylobacter jejuni subsp. doylei (strain ATCC BAA-1458 / RM4099 / 269.97).